We begin with the raw amino-acid sequence, 110 residues long: Insulin-2 (110 aa).

The first 24 residues, 1–24 (MALWMRFLPLLALLFLWESHPTQA), serve as a signal peptide directing secretion. Intrachain disulfides connect C31–C96, C43–C109, and C95–C100. Positions 57–87 (EVEDPQVAQLELGGGPGAGDLQTLALEVAQQ) are cleaved as a propeptide — c peptide.

It belongs to the insulin family. As to quaternary structure, heterodimer of a B chain and an A chain linked by two disulfide bonds.

The protein localises to the secreted. Insulin decreases blood glucose concentration. It increases cell permeability to monosaccharides, amino acids and fatty acids. It accelerates glycolysis, the pentose phosphate cycle, and glycogen synthesis in liver. The protein is Insulin-2 (Ins2) of Mus musculus (Mouse).